Here is a 100-residue protein sequence, read N- to C-terminus: UPF0213 protein YhbQ (100 aa).

The region spanning 2–77 is the GIY-YIG domain; sequence TPWFLYLIRT…KQLTKRQKER (76 aa).

Belongs to the UPF0213 family.

The chain is UPF0213 protein YhbQ from Escherichia fergusonii (strain ATCC 35469 / DSM 13698 / CCUG 18766 / IAM 14443 / JCM 21226 / LMG 7866 / NBRC 102419 / NCTC 12128 / CDC 0568-73).